A 406-amino-acid chain; its full sequence is Probable endo-xylogalacturonan hydrolase A (406 aa).

The N-terminal stretch at 1-18 is a signal peptide; that stretch reads MTLYRNLLLLASLGLSYA. A glycan (N-linked (GlcNAc...) asparagine) is linked at Asn-84. 2 PbH1 repeats span residues 183 to 213 and 214 to 235; these read ATNV…DIGE and STYV…ALKP. Catalysis depends on Asp-228, which acts as the Proton donor. The active site involves His-251. 3 PbH1 repeats span residues 266–289, 299–320, and 333–375; these read VKNI…KTYP, VSNV…QIQS, and PGNA…SISG. N-linked (GlcNAc...) asparagine glycosylation is found at Asn-278 and Asn-301.

This sequence belongs to the glycosyl hydrolase 28 family.

It is found in the secreted. Functionally, pectinolytic enzyme involved in the degradation of xylogalacturonan (xga), a galacturonan backbone heavily substituted with xylose, and which is one important component of the hairy regions of pectin. Activity requires a galacturonic acid backbone substituted with xylose. The polypeptide is Probable endo-xylogalacturonan hydrolase A (xghA) (Aspergillus niger (strain ATCC MYA-4892 / CBS 513.88 / FGSC A1513)).